We begin with the raw amino-acid sequence, 547 residues long: Methyl-accepting chemotaxis citrate transducer (547 aa).

Residues 1–5 (MKNIK) lie on the Cytoplasmic side of the membrane. Residues 6–29 (VITGVIATLGIFSALLLVTGILFY) traverse the membrane as a helical segment. The Periplasmic segment spans residues 30–189 (SAVSSDRLNF…ASDQNQSSFT (160 aa)). A helical membrane pass occupies residues 190–213 (QMQWTLGIILLIVLIVLAFIWLGL). Residues 214-547 (QRVLLRPLQR…AAEQANWESF (334 aa)) lie on the Cytoplasmic side of the membrane. In terms of domain architecture, HAMP spans 215–267 (RVLLRPLQRIMAHIQTIADGDLTHEIEAEGRSEMGQLAAGLKTMQQSLIRTVS). A Methyl-accepting transducer domain is found at 272 to 501 (NADSIYTGAG…ESAAAAAALE (230 aa)). Q296 is subject to Glutamate methyl ester (Gln). E303 carries the glutamate methyl ester (Glu) modification. Glutamate methyl ester (Gln) is present on Q310. Residues 317 to 336 (QNTDNARQATGLAKTASETA) are disordered. E492 and E501 each carry glutamate methyl ester (Glu). The interval 518 to 547 (KQPRREASPTTLSKGLTPQPAAEQANWESF) is disordered.

The protein belongs to the methyl-accepting chemotaxis (MCP) protein family. In terms of processing, methylation level is increased by citrate and decreased by phenol.

Its subcellular location is the cell inner membrane. Its function is as follows. Acts as a receptor for citrate and mediates taxis away from phenol. Also mediates an attractant response to metal-citrate complexes. The protein is Methyl-accepting chemotaxis citrate transducer (tcp) of Salmonella typhimurium (strain LT2 / SGSC1412 / ATCC 700720).